Consider the following 270-residue polypeptide: NAD kinase (270 aa).

Aspartate 61 (proton acceptor) is an active-site residue. NAD(+) is bound by residues 61–62 (DG), 133–134 (NE), arginine 144, arginine 163, aspartate 165, and 176–181 (TAYNLS).

It belongs to the NAD kinase family. It depends on a divalent metal cation as a cofactor.

The protein localises to the cytoplasm. It carries out the reaction NAD(+) + ATP = ADP + NADP(+) + H(+). In terms of biological role, involved in the regulation of the intracellular balance of NAD and NADP, and is a key enzyme in the biosynthesis of NADP. Catalyzes specifically the phosphorylation on 2'-hydroxyl of the adenosine moiety of NAD to yield NADP. The sequence is that of NAD kinase from Natronomonas pharaonis (strain ATCC 35678 / DSM 2160 / CIP 103997 / JCM 8858 / NBRC 14720 / NCIMB 2260 / Gabara) (Halobacterium pharaonis).